The following is a 343-amino-acid chain: MAEYDHYEDDGFLNSFNDSSQEEHQDFLQFRKVFLPCMYLVVFVCGLVGNSLVLVISIFYHKLQSLTDVFLVNLPLADLVFVCTLPFWTYAGIHEWIFGQVMCKTLLGVYTINFYTSMLILTCITVDRFIVVVKATKAYNQQAKRMTWGKVICLLIWVISLLVSLPQIIYGNVFNLDKLICGYHDEEISTVVLATQMTLGFFLPLLAMIVCYSVIIKTLLHAGGFQKHRSLKIIFLVMAVFLLTQTPFNLVKLIRSTRWEYYAMTSFHYTIIVTEAIAYLRACLNPVLYAFVSLKFRKNFWKLVKDIGCLPYLGVSHQWKSSEDNSKTFSASHNVEATSMFQL.

Over 1–33 (MAEYDHYEDDGFLNSFNDSSQEEHQDFLQFRKV) the chain is Extracellular. Asn-17 carries N-linked (GlcNAc...) asparagine glycosylation. The helical transmembrane segment at 34 to 60 (FLPCMYLVVFVCGLVGNSLVLVISIFY) threads the bilayer. The Cytoplasmic segment spans residues 61-69 (HKLQSLTDV). A helical transmembrane segment spans residues 70–90 (FLVNLPLADLVFVCTLPFWTY). The Extracellular portion of the chain corresponds to 91-104 (AGIHEWIFGQVMCK). A disulfide bond links Cys-103 and Cys-181. Residues 105–126 (TLLGVYTINFYTSMLILTCITV) traverse the membrane as a helical segment. At 127–144 (DRFIVVVKATKAYNQQAK) the chain is on the cytoplasmic side. A helical membrane pass occupies residues 145 to 165 (RMTWGKVICLLIWVISLLVSL). The Extracellular segment spans residues 166 to 188 (PQIIYGNVFNLDKLICGYHDEEI). Residues 189 to 216 (STVVLATQMTLGFFLPLLAMIVCYSVII) traverse the membrane as a helical segment. The Cytoplasmic portion of the chain corresponds to 217–232 (KTLLHAGGFQKHRSLK). Residues 233–260 (IIFLVMAVFLLTQTPFNLVKLIRSTRWE) traverse the membrane as a helical segment. Topologically, residues 261–276 (YYAMTSFHYTIIVTEA) are extracellular. Residues 277 to 294 (IAYLRACLNPVLYAFVSL) traverse the membrane as a helical segment. At 295 to 343 (KFRKNFWKLVKDIGCLPYLGVSHQWKSSEDNSKTFSASHNVEATSMFQL) the chain is on the cytoplasmic side.

Belongs to the G-protein coupled receptor 1 family.

Its subcellular location is the cell membrane. Functionally, receptor for the C-X-C chemokine CXCL16. Used as a coreceptor by SIVs and by strains of HIV-2 and m-tropic HIV-1. The polypeptide is C-X-C chemokine receptor type 6 (CXCR6) (Macaca fascicularis (Crab-eating macaque)).